The chain runs to 228 residues: L-ribulose-5-phosphate 4-epimerase UlaF (228 aa).

Residues 26–27, 43–44, and 72–73 each bind substrate; these read GN, SG, and SS. D74, H93, and H95 together coordinate Zn(2+). The active-site Proton donor/acceptor is D118. Zn(2+) is bound at residue H167. Catalysis depends on Y225, which acts as the Proton donor/acceptor.

This sequence belongs to the aldolase class II family. AraD/FucA subfamily. Requires Zn(2+) as cofactor.

It carries out the reaction L-ribulose 5-phosphate = D-xylulose 5-phosphate. It functions in the pathway cofactor degradation; L-ascorbate degradation; D-xylulose 5-phosphate from L-ascorbate: step 4/4. In terms of biological role, catalyzes the isomerization of L-ribulose 5-phosphate to D-xylulose 5-phosphate. Is involved in the anaerobic L-ascorbate utilization. The sequence is that of L-ribulose-5-phosphate 4-epimerase UlaF from Shigella dysenteriae serotype 1 (strain Sd197).